The sequence spans 430 residues: Glucose-6-phosphate isomerase (430 aa).

The active-site Proton donor is Glu-284. Residues His-305 and Lys-420 contribute to the active site.

This sequence belongs to the GPI family.

The protein resides in the cytoplasm. It carries out the reaction alpha-D-glucose 6-phosphate = beta-D-fructose 6-phosphate. Its pathway is carbohydrate biosynthesis; gluconeogenesis. The protein operates within carbohydrate degradation; glycolysis; D-glyceraldehyde 3-phosphate and glycerone phosphate from D-glucose: step 2/4. In terms of biological role, catalyzes the reversible isomerization of glucose-6-phosphate to fructose-6-phosphate. The chain is Glucose-6-phosphate isomerase from Mycoplasmopsis synoviae (strain 53) (Mycoplasma synoviae).